A 293-amino-acid polypeptide reads, in one-letter code: Protease HtpX (293 aa).

The next 2 helical transmembrane spans lie at 4–24 (IGLF…VLSL) and 38–58 (LTNL…ISLF). H145 serves as a coordination point for Zn(2+). The active site involves E146. H149 contacts Zn(2+). 2 helical membrane passes run 156–176 (ITLS…ARII) and 193–213 (IAFF…ASMI). Zn(2+) is bound at residue E222.

The protein belongs to the peptidase M48B family. Zn(2+) is required as a cofactor.

It is found in the cell inner membrane. The sequence is that of Protease HtpX from Cellvibrio japonicus (strain Ueda107) (Pseudomonas fluorescens subsp. cellulosa).